Consider the following 107-residue polypeptide: Ig kappa chain V-VI region XRPC 44 (107 aa).

The framework-1 stretch occupies residues 1–23; that stretch reads EIVLTQSPAITAASLGQKVTITC. An intrachain disulfide couples Cys-23 to Cys-87. The tract at residues 24–33 is complementarity-determining-1; that stretch reads SASSSVSYMH. The segment at 34–48 is framework-2; the sequence is WYQQKSGTSPKPWIY. The segment at 49–55 is complementarity-determining-2; that stretch reads EISKLAS. The tract at residues 56–87 is framework-3; sequence GVPARFSGSGSGTSYSLTISSMEAEDAAIYYC. Positions 88-96 are complementarity-determining-3; the sequence is QQWNYPLWT. Positions 97–106 are framework-4; that stretch reads FGGGTKLEIK.

The sequence is that of Ig kappa chain V-VI region XRPC 44 from Mus musculus (Mouse).